Here is a 536-residue protein sequence, read N- to C-terminus: Cytochrome P450 monooxygenase macC (536 aa).

Residues 2-22 (ALLYITTAALALLLLFLRAVF) traverse the membrane as a helical segment. A heme-binding site is contributed by C448.

The protein belongs to the cytochrome P450 family. Heme is required as a cofactor.

Its subcellular location is the membrane. It participates in secondary metabolite biosynthesis; terpenoid biosynthesis. Its function is as follows. Cytochrome P450 monooxygenase; part of the gene cluster that mediates the biosynthesis of macrophorins, isoprenoid epoxycyclohexenones containing cyclized drimane moieties. The first step of the pathway is the synthesis of 6-methylsalicylic acid (6-MSA) by the polyketide synthase macA. 6-MSA is then converted to m-cresol by the decarboxylase macB. The cytochrome P450 monooxygenase macC then catalyzes the oxidation of m-cresol to toluquinol. Epoxidation of toluquinol is then performed by the short chain dehydrogenase macD, with the help of macE, and a further prenylation by macG leads to 7-deacetoxyyanuthone A. The next step is the hydroxylation of C-22 of 7-deacetoxyyanuthone A by the cytochrome P450 monooxygenase macH to yield 22-deacetylyanuthone A. O-Mevalon transferase macI then attaches mevalon to the hydroxyl group of 22-deacetylyanuthone A to produce yanuthone E. The terpene cyclase macJ catalyzes the cyclization of 22-deacetylyanuthone A to macrophorin A. MacJ is also able to catalyze cyclization of yanuthone E and 7-deacetoxyyanuthone A to their corresponding macrophorins. The macJ products can be further modified by macH and macJ, as well as by the FAD-dependent monooxygenase macF, to produce additional macrophorins, including 4'-oxomacrophorin A, 4'-oxomacrophorin D and 4'-oxomacrophorin E. The sequence is that of Cytochrome P450 monooxygenase macC from Penicillium terrestre.